We begin with the raw amino-acid sequence, 360 residues long: D-alanine--D-alanine ligase (360 aa).

An ATP-grasp domain is found at 134 to 343 (KILAQRVGVP…YTELITRLIE (210 aa)). 169-224 (AEKLGRDMFVKPSNQGSSVGVSHVTNADEYAAALKEAFKYDDKVLVEETVPGTEVE) contacts ATP. Mg(2+) is bound by residues Asp297, Glu310, and Asn312.

This sequence belongs to the D-alanine--D-alanine ligase family. It depends on Mg(2+) as a cofactor. Mn(2+) serves as cofactor.

It localises to the cytoplasm. It catalyses the reaction 2 D-alanine + ATP = D-alanyl-D-alanine + ADP + phosphate + H(+). The protein operates within cell wall biogenesis; peptidoglycan biosynthesis. In terms of biological role, cell wall formation. The chain is D-alanine--D-alanine ligase from Lactobacillus helveticus (strain DPC 4571).